Here is a 337-residue protein sequence, read N- to C-terminus: tRNA N6-adenosine threonylcarbamoyltransferase (337 aa).

Fe cation is bound by residues His111 and His115. Substrate is bound by residues 134–138, Asp167, Gly180, and Asn272; that span reads LVSGG. Position 300 (Asp300) interacts with Fe cation.

Belongs to the KAE1 / TsaD family. It depends on Fe(2+) as a cofactor.

It localises to the cytoplasm. The enzyme catalyses L-threonylcarbamoyladenylate + adenosine(37) in tRNA = N(6)-L-threonylcarbamoyladenosine(37) in tRNA + AMP + H(+). In terms of biological role, required for the formation of a threonylcarbamoyl group on adenosine at position 37 (t(6)A37) in tRNAs that read codons beginning with adenine. Is involved in the transfer of the threonylcarbamoyl moiety of threonylcarbamoyl-AMP (TC-AMP) to the N6 group of A37, together with TsaE and TsaB. TsaD likely plays a direct catalytic role in this reaction. This is tRNA N6-adenosine threonylcarbamoyltransferase from Citrobacter koseri (strain ATCC BAA-895 / CDC 4225-83 / SGSC4696).